Consider the following 471-residue polypeptide: Mannose-1-phosphate guanylyltransferase (471 aa).

This sequence belongs to the mannose-6-phosphate isomerase type 2 family.

It carries out the reaction alpha-D-mannose 1-phosphate + GTP + H(+) = GDP-alpha-D-mannose + diphosphate. It participates in nucleotide-sugar biosynthesis; GDP-alpha-D-mannose biosynthesis; GDP-alpha-D-mannose from alpha-D-mannose 1-phosphate (GTP route): step 1/1. Its function is as follows. Involved in GDP-mannose biosynthesis which serves as the activated sugar nucleotide precursor for mannose residues in cell surface polysaccharides. This enzyme participates in synthesis of the LPS O antigen. The sequence is that of Mannose-1-phosphate guanylyltransferase (manC) from Salmonella montevideo.